Reading from the N-terminus, the 134-residue chain is uncharacterized protein (134 aa).

3 consecutive transmembrane segments (helical) span residues 21-41 (FSTT…LYLI), 52-72 (LVLL…TPYE), and 95-115 (IVMA…VYII).

It localises to the host membrane. This is an uncharacterized protein from Acidianus two-tailed virus (ATV).